A 608-amino-acid chain; its full sequence is Albumin (608 aa).

Residues 1-18 (MKWVTFLLLLFISGSAFS) form the signal peptide. Residues 19-24 (RGVFRR) constitute a propeptide that is removed on maturation. Albumin domains are found at residues 19–211 (RGVF…AVKE), 212–403 (KALV…EFQP), and 404–601 (LVEE…NLVA). His-27 lines the Cu cation pocket. A Phosphoserine modification is found at Ser-29. Ca(2+) contacts are provided by Glu-30 and Asp-37. A disulfide bond links Cys-77 and Cys-86. Ser-89 is modified (phosphoserine). Position 91 (His-91) interacts with Zn(2+). Intrachain disulfides connect Cys-99/Cys-115, Cys-114/Cys-125, Cys-148/Cys-193, Cys-192/Cys-201, Cys-224/Cys-270, and Cys-269/Cys-277. A Ca(2+)-binding site is contributed by Glu-268. Zn(2+)-binding residues include His-271 and Asp-273. Asp-273, Glu-276, and Asp-279 together coordinate Ca(2+). Intrachain disulfides connect Cys-289-Cys-303, Cys-302-Cys-313, Cys-340-Cys-385, Cys-384-Cys-393, Cys-416-Cys-462, Cys-461-Cys-472, Cys-485-Cys-501, and Cys-500-Cys-511. Phosphoserine is present on Ser-297. Residue Ser-443 is modified to Phosphoserine. Thr-444 and Thr-446 each carry phosphothreonine. Lys-460 bears the N6-succinyllysine mark. Ser-513 carries the phosphoserine modification. 2 disulfides stabilise this stretch: Cys-538–Cys-583 and Cys-582–Cys-591. Position 543 is an N6-succinyllysine (Lys-543). An N6-methyllysine modification is found at Lys-558. Thr-570 bears the Phosphothreonine mark. Lys-588 is modified (N6-succinyllysine).

It belongs to the ALB/AFP/VDB family. As to quaternary structure, interacts with FCGRT; this interaction regulates ALB homeostasis. Interacts with TASOR. In plasma, occurs in a covalently-linked complex with chromophore-bound alpha-1-microglobulin; this interaction does not prevent fatty acid binding to ALB. Phosphorylated by FAM20C in the extracellular medium. Plasma.

Its subcellular location is the secreted. Its function is as follows. Binds water, Ca(2+), Na(+), K(+), fatty acids, hormones, bilirubin and drugs. Its main function is the regulation of the colloidal osmotic pressure of blood. Major zinc transporter in plasma, typically binds about 80% of all plasma zinc. Major calcium and magnesium transporter in plasma, binds approximately 45% of circulating calcium and magnesium in plasma. Potentially has more than two calcium-binding sites and might additionally bind calcium in a non-specific manner. The shared binding site between zinc and calcium at residue Asp-273 suggests a crosstalk between zinc and calcium transport in the blood. The rank order of affinity is zinc &gt; calcium &gt; magnesium. Binds to the bacterial siderophore enterobactin and inhibits enterobactin-mediated iron uptake of E.coli from ferric transferrin, and may thereby limit the utilization of iron and growth of enteric bacteria such as E.coli. Does not prevent iron uptake by the bacterial siderophore aerobactin. The polypeptide is Albumin (Alb) (Rattus norvegicus (Rat)).